Reading from the N-terminus, the 194-residue chain is Putative L,D-transpeptidase YciB (194 aa).

A signal peptide spans 1–19 (MKLSLFIIAVLMPVILLSA). Cysteine 20 is lipidated: N-palmitoyl cysteine. Cysteine 20 carries the S-diacylglycerol cysteine lipid modification. Positions 68–194 (VWIDVNVKEQ…IPEHTKVVIS (127 aa)) constitute a L,D-TPase catalytic domain. Histidine 144 (proton donor/acceptor) is an active-site residue. The Nucleophile role is filled by cysteine 170.

This sequence belongs to the YkuD family.

It localises to the cell membrane. It functions in the pathway cell wall biogenesis; peptidoglycan biosynthesis. The polypeptide is Putative L,D-transpeptidase YciB (yciB) (Bacillus subtilis (strain 168)).